The primary structure comprises 395 residues: Xylose isomerase (395 aa).

Catalysis depends on residues His-54 and Glu-57. Residues 80-108 (AVPAGAGRDRHEGADGDDEPVHAPGCSRD) are disordered. The Mg(2+) site is built by Glu-189, Glu-225, His-228, Asp-253, Asp-263, Asp-265, and Asp-295.

Belongs to the xylose isomerase family. As to quaternary structure, homotetramer. Mg(2+) is required as a cofactor.

The protein localises to the cytoplasm. It catalyses the reaction alpha-D-xylose = alpha-D-xylulofuranose. The protein is Xylose isomerase of Streptomyces lividans.